Here is a 180-residue protein sequence, read N- to C-terminus: Large ribosomal subunit protein uL6 (180 aa).

This sequence belongs to the universal ribosomal protein uL6 family. As to quaternary structure, part of the 50S ribosomal subunit.

Functionally, this protein binds to the 23S rRNA, and is important in its secondary structure. It is located near the subunit interface in the base of the L7/L12 stalk, and near the tRNA binding site of the peptidyltransferase center. The sequence is that of Large ribosomal subunit protein uL6 from Borrelia hermsii (strain HS1 / DAH).